A 459-amino-acid chain; its full sequence is Tubulin gamma chain (459 aa).

142–148 (AGGTGSG) is a binding site for GTP. The disordered stretch occupies residues 440 to 459 (ADYLTKETAPTDEAEDKRAG).

This sequence belongs to the tubulin family.

The protein localises to the cytoplasm. It localises to the cytoskeleton. It is found in the microtubule organizing center. Its subcellular location is the spindle pole body. In terms of biological role, tubulin is the major constituent of microtubules. The gamma chain is found at microtubule organizing centers (MTOC) such as the spindle poles or the centrosome, suggesting that it is involved in the minus-end nucleation of microtubule assembly. The sequence is that of Tubulin gamma chain (TUB4) from Cochliobolus heterostrophus (strain C5 / ATCC 48332 / race O) (Southern corn leaf blight fungus).